The chain runs to 318 residues: Ribokinase (318 aa).

Substrate is bound by residues 11-13 (NTD), 41-45 (GKGAN), and glutamate 146. ATP contacts are provided by residues asparagine 190 and 229–234 (TLGSQG). 2 residues coordinate K(+): aspartate 256 and threonine 258. An ATP-binding site is contributed by 261–262 (GD). Aspartate 262 serves as a coordination point for substrate. The active-site Proton acceptor is aspartate 262. Residues threonine 292, arginine 295, glycine 297, and serine 301 each contribute to the K(+) site.

It belongs to the carbohydrate kinase PfkB family. Ribokinase subfamily. In terms of assembly, homodimer. Mg(2+) is required as a cofactor.

The protein localises to the cytoplasm. Its subcellular location is the nucleus. It catalyses the reaction D-ribose + ATP = D-ribose 5-phosphate + ADP + H(+). The protein operates within carbohydrate metabolism; D-ribose degradation; D-ribose 5-phosphate from beta-D-ribopyranose: step 2/2. Activated by a monovalent cation that binds near, but not in, the active site. The most likely occupant of the site in vivo is potassium. Ion binding induces a conformational change that may alter substrate affinity. In terms of biological role, catalyzes the phosphorylation of ribose at O-5 in a reaction requiring ATP and magnesium. The resulting D-ribose-5-phosphate can then be used either for sythesis of nucleotides, histidine, and tryptophan, or as a component of the pentose phosphate pathway. In Schizosaccharomyces pombe (strain 972 / ATCC 24843) (Fission yeast), this protein is Ribokinase.